A 320-amino-acid chain; its full sequence is Aldose reductase (320 aa).

Tyr60 functions as the Proton donor in the catalytic mechanism. His121 is a binding site for substrate. Ser215–Asn269 lines the NADP(+) pocket.

This sequence belongs to the aldo/keto reductase family.

It catalyses the reaction an alditol + NAD(+) = an aldose + NADH + H(+). The enzyme catalyses an alditol + NADP(+) = an aldose + NADPH + H(+). The protein is Aldose reductase of Hordeum vulgare (Barley).